Consider the following 557-residue polypeptide: MPQRIELTSEPVRKPRSTESSLLRKIQRACRSTLPEPDLGLNLDVADYINSKQGATPREAVLAIEKLVNNGDTQAAVFALSLLDVLVKNCGYSIHLQISRKEFLNDLVKRFPEQPPLRYSKVQQMILEAIEEWYQTICKHASYKDDLQYINDMHKLLKYKGYTFPKVGSENLAVLRPNDQLRTPSELQEEQERAQAAKLEELLRSGKPDDLKEANKLMKIMAGFKDDTKVAVKQAINNELNKLKRKADLFNEMLTSADEPDLENEAIQELYGDLKSAQPKFKKLIEEERDDDALVSNLSKFNDLVIQLLKRYKSIKGMKEEELNVPDTNEPAKELNLIDFDDDTTANTPSVTSPSKSLQPFDDLLGDFNKVSLSSPKSPQENDTVVDILGDAHSKSSGIDLLDFDSQPGESKTALSAYSNSIVLPNGLLNSSSNSKEITAQSQRHILNQSDHLRIDYELTRESMTKLRLVIFYSNISSDPITNFALLVASPKGTTLSLQPQSGNMLQSNSRDGIKQIASVEGISVNLGKPIKLKWKANYCTKGDSKEESGTTSLPTI.

Residues 29–165 enclose the VHS domain; it reads ACRSTLPEPD…LLKYKGYTFP (137 aa). One can recognise a GAT domain in the interval 192–317; it reads ERAQAAKLEE…LLKRYKSIKG (126 aa). Thr348 bears the Phosphothreonine mark. A phosphoserine mark is found at Ser353, Ser357, Ser378, and Ser394. Positions 440–556 constitute a GAE domain; that stretch reads AQSQRHILNQ…EESGTTSLPT (117 aa).

Binds to ARF1 and ARF2.

It localises to the golgi apparatus. It is found in the trans-Golgi network. In terms of biological role, may play a role in the regulation of membrane traffic through the trans-Golgi network. In Saccharomyces cerevisiae (strain ATCC 204508 / S288c) (Baker's yeast), this protein is ADP-ribosylation factor-binding protein GGA1 (GGA1).